The chain runs to 202 residues: LexA repressor (202 aa).

Positions Arg28–Lys48 form a DNA-binding region, H-T-H motif. Catalysis depends on for autocatalytic cleavage activity residues Ser123 and Lys160.

It belongs to the peptidase S24 family. As to quaternary structure, homodimer.

It catalyses the reaction Hydrolysis of Ala-|-Gly bond in repressor LexA.. Functionally, represses a number of genes involved in the response to DNA damage (SOS response), including recA and lexA. In the presence of single-stranded DNA, RecA interacts with LexA causing an autocatalytic cleavage which disrupts the DNA-binding part of LexA, leading to derepression of the SOS regulon and eventually DNA repair. The polypeptide is LexA repressor (Pseudomonas putida (Arthrobacter siderocapsulatus)).